A 370-amino-acid polypeptide reads, in one-letter code: Cytochrome b (370 aa).

4 consecutive transmembrane segments (helical) span residues 25 to 45, 69 to 90, 105 to 125, and 170 to 190; these read FGSMLLACSTLQVLTGFFLAV, WLMQNLHAIGASMFFICIYIHI, WLSGTTLLIMLMATAFFGYVL, and FFALHFILPFGIISLSSLHIL. Positions 75 and 89 each coordinate heme b. The heme b site is built by H174 and H188. Residue H193 coordinates a ubiquinone. The next 4 membrane-spanning stretches (helical) occupy residues 218-238, 280-300, 312-332, and 339-358; these read YKDLLMLAMLTTLLLMIVSFF, LGGALALTMSIMILLTVPFTH, LMQLMFWTFAATFLVISWSST, and FTTISQAAALMYFLFFISKP.

The protein belongs to the cytochrome b family. The cytochrome bc1 complex contains 3 respiratory subunits (MT-CYB, CYC1 and UQCRFS1), 2 core proteins (UQCRC1 and UQCRC2) and probably 6 low-molecular weight proteins. Heme b serves as cofactor.

Its subcellular location is the mitochondrion inner membrane. Functionally, component of the ubiquinol-cytochrome c reductase complex (complex III or cytochrome b-c1 complex) that is part of the mitochondrial respiratory chain. The b-c1 complex mediates electron transfer from ubiquinol to cytochrome c. Contributes to the generation of a proton gradient across the mitochondrial membrane that is then used for ATP synthesis. This chain is Cytochrome b (MT-CYB), found in Chilabothrus subflavus (Jamaican yellow boa).